The following is a 270-amino-acid chain: 3-methyl-2-oxobutanoate hydroxymethyltransferase (270 aa).

Mg(2+) is bound by residues aspartate 41 and aspartate 80. 3-methyl-2-oxobutanoate-binding positions include 41–42 (DS), aspartate 80, and lysine 109. Glutamate 111 contributes to the Mg(2+) binding site. The active-site Proton acceptor is the glutamate 178.

Belongs to the PanB family. As to quaternary structure, homodecamer; pentamer of dimers. It depends on Mg(2+) as a cofactor.

The protein resides in the cytoplasm. The catalysed reaction is 3-methyl-2-oxobutanoate + (6R)-5,10-methylene-5,6,7,8-tetrahydrofolate + H2O = 2-dehydropantoate + (6S)-5,6,7,8-tetrahydrofolate. It participates in cofactor biosynthesis; (R)-pantothenate biosynthesis; (R)-pantoate from 3-methyl-2-oxobutanoate: step 1/2. Functionally, catalyzes the reversible reaction in which hydroxymethyl group from 5,10-methylenetetrahydrofolate is transferred onto alpha-ketoisovalerate to form ketopantoate. The protein is 3-methyl-2-oxobutanoate hydroxymethyltransferase of Thermotoga neapolitana (strain ATCC 49049 / DSM 4359 / NBRC 107923 / NS-E).